The chain runs to 357 residues: Glucose 1-dehydrogenase (357 aa).

Asp-38 contributes to the Zn(2+) binding site. Substrate is bound by residues Thr-40 and His-49. Residues His-63 and Glu-64 each contribute to the Zn(2+) site. Residues Glu-114 and Glu-150 each coordinate substrate. Glu-150 contacts Zn(2+). NADP(+)-binding positions include 181 to 184 (NGSL), 207 to 208 (RR), Ser-228, 272 to 274 (LGV), and 301 to 303 (SVN). Residue Asn-303 participates in substrate binding.

The protein belongs to the zinc-containing alcohol dehydrogenase family. Glucose 1-dehydrogenase subfamily. Homodimer. Requires Zn(2+) as cofactor.

The catalysed reaction is D-glucose + NAD(+) = D-glucono-1,5-lactone + NADH + H(+). The enzyme catalyses D-glucose + NADP(+) = D-glucono-1,5-lactone + NADPH + H(+). Activated by molar concentrations of KCl or NaCl. Inhibited by EDTA in vitro. Its function is as follows. Catalyzes the NAD(P)(+)-dependent oxidation of D-glucose to D-gluconate. Displays broad substrate specificity since it is able to catalyze the oxidation of a number of alternative aldose sugars, such as D-xylose, D-galactose, and D-fucose, to the corresponding glyconate. Can utilize both NAD(+) and NADP(+) as electron acceptor, with a preference for NADP(+). Physiologically, seems to be involved in the degradation of glucose through a modified Entner-Doudoroff pathway. This Haloferax mediterranei (strain ATCC 33500 / DSM 1411 / JCM 8866 / NBRC 14739 / NCIMB 2177 / R-4) (Halobacterium mediterranei) protein is Glucose 1-dehydrogenase.